Here is a 157-residue protein sequence, read N- to C-terminus: ATP synthase subunit b 1 (157 aa).

The helical transmembrane segment at 7 to 29 threads the bilayer; the sequence is LFGQMVTFALLVWFTMKYVWPPL.

Belongs to the ATPase B chain family. As to quaternary structure, F-type ATPases have 2 components, F(1) - the catalytic core - and F(0) - the membrane proton channel. F(1) has five subunits: alpha(3), beta(3), gamma(1), delta(1), epsilon(1). F(0) has three main subunits: a(1), b(2) and c(10-14). The alpha and beta chains form an alternating ring which encloses part of the gamma chain. F(1) is attached to F(0) by a central stalk formed by the gamma and epsilon chains, while a peripheral stalk is formed by the delta and b chains.

The protein localises to the cell inner membrane. Its function is as follows. F(1)F(0) ATP synthase produces ATP from ADP in the presence of a proton or sodium gradient. F-type ATPases consist of two structural domains, F(1) containing the extramembraneous catalytic core and F(0) containing the membrane proton channel, linked together by a central stalk and a peripheral stalk. During catalysis, ATP synthesis in the catalytic domain of F(1) is coupled via a rotary mechanism of the central stalk subunits to proton translocation. In terms of biological role, component of the F(0) channel, it forms part of the peripheral stalk, linking F(1) to F(0). The sequence is that of ATP synthase subunit b 1 from Methylococcus capsulatus (strain ATCC 33009 / NCIMB 11132 / Bath).